Reading from the N-terminus, the 280-residue chain is MDTIEYTEFSPPLAQRAAGLAQLGCASADGRTRLRRLYQDGSAKIRLPAVLADPLEAVLINTAGGLTGGDRIGWDVDVGTEASASITTQACEKVYRAASDQAEVRVKLTVGENGRIAWLPQETIVFDRAAFARTLDVELAAGAEALVLEATVFGRLAMGERASQGTFRDRWRVRQDGFLIHAEDFRIGPDITGALARPAAAGGVIAVATLLLVSPRAEALLDPVREIVGHQGGASVWSVKASGKLLARLYAGDGYQLRQRLVPLVGLLNGRAGLPKLWSL.

It belongs to the UreD family. In terms of assembly, ureD, UreF and UreG form a complex that acts as a GTP-hydrolysis-dependent molecular chaperone, activating the urease apoprotein by helping to assemble the nickel containing metallocenter of UreC. The UreE protein probably delivers the nickel.

It localises to the cytoplasm. Required for maturation of urease via the functional incorporation of the urease nickel metallocenter. In Mesorhizobium japonicum (strain LMG 29417 / CECT 9101 / MAFF 303099) (Mesorhizobium loti (strain MAFF 303099)), this protein is Urease accessory protein UreD.